The sequence spans 52 residues: ATP synthase protein 8 (52 aa).

Residues 10 to 30 (FLMSLMIMMILIFMTINFYFF) traverse the membrane as a helical segment.

This sequence belongs to the ATPase protein 8 family. As to quaternary structure, F-type ATPases have 2 components, CF(1) - the catalytic core - and CF(0) - the membrane proton channel.

Its subcellular location is the mitochondrion membrane. Its function is as follows. Mitochondrial membrane ATP synthase (F(1)F(0) ATP synthase or Complex V) produces ATP from ADP in the presence of a proton gradient across the membrane which is generated by electron transport complexes of the respiratory chain. F-type ATPases consist of two structural domains, F(1) - containing the extramembraneous catalytic core and F(0) - containing the membrane proton channel, linked together by a central stalk and a peripheral stalk. During catalysis, ATP synthesis in the catalytic domain of F(1) is coupled via a rotary mechanism of the central stalk subunits to proton translocation. Part of the complex F(0) domain. Minor subunit located with subunit a in the membrane. This Rhipicephalus sanguineus (Brown dog tick) protein is ATP synthase protein 8 (MT-ATP8).